Consider the following 211-residue polypeptide: Large ribosomal subunit protein uL4 (211 aa).

The tract at residues Arg63–Val94 is disordered.

It belongs to the universal ribosomal protein uL4 family. As to quaternary structure, part of the 50S ribosomal subunit.

In terms of biological role, one of the primary rRNA binding proteins, this protein initially binds near the 5'-end of the 23S rRNA. It is important during the early stages of 50S assembly. It makes multiple contacts with different domains of the 23S rRNA in the assembled 50S subunit and ribosome. Functionally, forms part of the polypeptide exit tunnel. This is Large ribosomal subunit protein uL4 from Maricaulis maris (strain MCS10) (Caulobacter maris).